We begin with the raw amino-acid sequence, 243 residues long: Protein GrpE (243 aa).

It belongs to the GrpE family. As to quaternary structure, homodimer.

It is found in the cytoplasm. Functionally, participates actively in the response to hyperosmotic and heat shock by preventing the aggregation of stress-denatured proteins, in association with DnaK and GrpE. It is the nucleotide exchange factor for DnaK and may function as a thermosensor. Unfolded proteins bind initially to DnaJ; upon interaction with the DnaJ-bound protein, DnaK hydrolyzes its bound ATP, resulting in the formation of a stable complex. GrpE releases ADP from DnaK; ATP binding to DnaK triggers the release of the substrate protein, thus completing the reaction cycle. Several rounds of ATP-dependent interactions between DnaJ, DnaK and GrpE are required for fully efficient folding. This Mycoplasma mobile (strain ATCC 43663 / 163K / NCTC 11711) (Mesomycoplasma mobile) protein is Protein GrpE.